A 575-amino-acid chain; its full sequence is Proline--tRNA ligase (575 aa).

Belongs to the class-II aminoacyl-tRNA synthetase family. ProS type 1 subfamily. As to quaternary structure, homodimer.

The protein resides in the cytoplasm. It catalyses the reaction tRNA(Pro) + L-proline + ATP = L-prolyl-tRNA(Pro) + AMP + diphosphate. Functionally, catalyzes the attachment of proline to tRNA(Pro) in a two-step reaction: proline is first activated by ATP to form Pro-AMP and then transferred to the acceptor end of tRNA(Pro). As ProRS can inadvertently accommodate and process non-cognate amino acids such as alanine and cysteine, to avoid such errors it has two additional distinct editing activities against alanine. One activity is designated as 'pretransfer' editing and involves the tRNA(Pro)-independent hydrolysis of activated Ala-AMP. The other activity is designated 'posttransfer' editing and involves deacylation of mischarged Ala-tRNA(Pro). The misacylated Cys-tRNA(Pro) is not edited by ProRS. The chain is Proline--tRNA ligase from Anaeromyxobacter sp. (strain Fw109-5).